The chain runs to 191 residues: Transmembrane protein 17B (191 aa).

4 helical membrane passes run 50 to 70 (MSLYFNMWFFPFWWISEVVML), 83 to 103 (FILITILIVMTLIEAIRLYLG), 115 to 135 (LAGFWLLTFLLQFPLILFQLF), and 147 to 167 (GVHIILALFIFAEVLFGFVAL).

This sequence belongs to the TMEM17 family. In terms of assembly, part of the tectonic-like complex (also named B9 complex).

The protein localises to the cell projection. The protein resides in the cilium membrane. Transmembrane component of the tectonic-like complex, a complex localized at the transition zone of primary cilia and acting as a barrier that prevents diffusion of transmembrane proteins between the cilia and plasma membranes. Required for ciliogenesis and sonic hedgehog/SHH signaling. This is Transmembrane protein 17B (Tmem17b) from Danio rerio (Zebrafish).